The following is a 336-amino-acid chain: Ornithine carbamoyltransferase, catabolic (336 aa).

Carbamoyl phosphate is bound by residues 62–65, glutamine 89, arginine 113, and 140–143; these read STRT and HPTQ. Residues asparagine 172, aspartate 236, and 240–241 contribute to the L-ornithine site; that span reads SM. Carbamoyl phosphate is bound by residues 277–278 and arginine 322; that span reads CL.

It belongs to the aspartate/ornithine carbamoyltransferase superfamily. OTCase family.

Its subcellular location is the cytoplasm. It carries out the reaction carbamoyl phosphate + L-ornithine = L-citrulline + phosphate + H(+). It functions in the pathway amino-acid degradation; L-arginine degradation via ADI pathway; carbamoyl phosphate from L-arginine: step 2/2. Functionally, reversibly catalyzes the transfer of the carbamoyl group from carbamoyl phosphate (CP) to the N(epsilon) atom of ornithine (ORN) to produce L-citrulline. In Staphylococcus aureus (strain MRSA252), this protein is Ornithine carbamoyltransferase, catabolic.